A 397-amino-acid polypeptide reads, in one-letter code: Phosphoglycerate kinase (397 aa).

Residues Asp-25–Asn-27, Arg-41, His-64–Arg-67, Arg-118, and Arg-151 each bind substrate. Residues Lys-202, Glu-324, and Gly-350–Thr-353 each bind ATP.

The protein belongs to the phosphoglycerate kinase family. As to quaternary structure, monomer.

It is found in the cytoplasm. The enzyme catalyses (2R)-3-phosphoglycerate + ATP = (2R)-3-phospho-glyceroyl phosphate + ADP. It participates in carbohydrate degradation; glycolysis; pyruvate from D-glyceraldehyde 3-phosphate: step 2/5. The chain is Phosphoglycerate kinase from Albidiferax ferrireducens (strain ATCC BAA-621 / DSM 15236 / T118) (Rhodoferax ferrireducens).